The following is a 102-amino-acid chain: Small ribosomal subunit protein uS10 (102 aa).

Belongs to the universal ribosomal protein uS10 family. Part of the 30S ribosomal subunit.

Its function is as follows. Involved in the binding of tRNA to the ribosomes. This is Small ribosomal subunit protein uS10 from Micrococcus luteus (strain ATCC 4698 / DSM 20030 / JCM 1464 / CCM 169 / CCUG 5858 / IAM 1056 / NBRC 3333 / NCIMB 9278 / NCTC 2665 / VKM Ac-2230) (Micrococcus lysodeikticus).